We begin with the raw amino-acid sequence, 898 residues long: DNA damage-induced apoptosis suppressor protein (898 aa).

Disordered stretches follow at residues 191–210, 643–670, and 710–749; these read CGSQEHSSQSLTSDDSDSDL, SINTSKEMPYRPSNNNLTPSSSGDHEGS, and YPINENRGQPSQKPSLQSISPSRYSRPRSQSDSECDFEES. Composition is skewed to polar residues over residues 643–664 and 710–725; these read SINTSKEMPYRPSNNNLTPSSS and YPINENRGQPSQKPSL. A compositionally biased stretch (low complexity) spans 726–741; it reads QSISPSRYSRPRSQSD.

As to expression, highly expressed in the testis, spleen and heart. Expressed at high levels in the primary spermatocytes and to a lesser extent in the round spermatids. Also found in the bone marrow, brain, lung, kidney and liver.

The protein resides in the cytoplasm. It localises to the nucleus. May be an anti-apoptotic protein involved in DNA repair or cell survival. The chain is DNA damage-induced apoptosis suppressor protein (Ddias) from Mus musculus (Mouse).